The primary structure comprises 377 residues: DNA replication and repair protein RecF (377 aa).

30-37 (GPNGQGKT) is a binding site for ATP.

This sequence belongs to the RecF family.

The protein resides in the cytoplasm. The RecF protein is involved in DNA metabolism; it is required for DNA replication and normal SOS inducibility. RecF binds preferentially to single-stranded, linear DNA. It also seems to bind ATP. This Thermobifida fusca (strain YX) protein is DNA replication and repair protein RecF.